We begin with the raw amino-acid sequence, 86 residues long: Acyl carrier protein (86 aa).

In terms of domain architecture, Carrier spans Ala-2–Gly-82. Residue Ser-37 is modified to O-(pantetheine 4'-phosphoryl)serine.

This sequence belongs to the acyl carrier protein (ACP) family. 4'-phosphopantetheine is transferred from CoA to a specific serine of apo-ACP by AcpS. This modification is essential for activity because fatty acids are bound in thioester linkage to the sulfhydryl of the prosthetic group.

The protein resides in the cytoplasm. Its pathway is lipid metabolism; fatty acid biosynthesis. Its function is as follows. Carrier of the growing fatty acid chain in fatty acid biosynthesis. The sequence is that of Acyl carrier protein from Dehalococcoides mccartyi (strain ATCC BAA-2266 / KCTC 15142 / 195) (Dehalococcoides ethenogenes (strain 195)).